Reading from the N-terminus, the 296-residue chain is Glycine N-acyltransferase (296 aa).

3 positions are modified to N6-acetyllysine; alternate: Lys16, Lys127, and Lys141. Lys16, Lys127, and Lys141 each carry N6-succinyllysine; alternate. Residue Lys159 is modified to N6-acetyllysine. Lys169 bears the N6-succinyllysine mark. Residues Lys183 and Lys256 each carry the N6-acetyllysine; alternate modification. 2 positions are modified to N6-succinyllysine; alternate: Lys183 and Lys256.

Belongs to the glycine N-acyltransferase family. In terms of tissue distribution, predominantly expressed in liver (at protein level) and kidney. Down-regulated in hepatocellular carcinoma and other liver cancers.

Its subcellular location is the mitochondrion. It catalyses the reaction an acyl-CoA + glycine = an N-acylglycine + CoA + H(+). The enzyme catalyses benzoyl-CoA + glycine = N-benzoylglycine + CoA + H(+). Functionally, mitochondrial acyltransferase which transfers an acyl group to the N-terminus of glycine and glutamine, although much less efficiently. Can conjugate numerous substrates to form a variety of N-acylglycines, with a preference for benzoyl-CoA over phenylacetyl-CoA as acyl donors. Thereby detoxify xenobiotics, such as benzoic acid or salicylic acid, and endogenous organic acids, such as isovaleric acid. The polypeptide is Glycine N-acyltransferase (GLYAT) (Homo sapiens (Human)).